The primary structure comprises 920 residues: Glutamate receptor 2.2 (920 aa).

An N-terminal signal peptide occupies residues 1–24 (MKNSKLFFRFLFLFFFFCLESSRG). The Extracellular portion of the chain corresponds to 25-580 (QDNGKTQVNI…DKFSFLKPLS (556 aa)). 7 N-linked (GlcNAc...) asparagine glycosylation sites follow: N53, N204, N267, N331, N342, N477, and N542. The helical transmembrane segment at 581–601 (IELWLTTLVFFFLVGISVWTL) threads the bilayer. The Cytoplasmic segment spans residues 602 to 610 (EHRVNSDFR). The chain crosses the membrane as a helical span at residues 611-631 (GPANYQASTIFWFAFSTMVFA). Residues 632–635 (PRER) are Cytoplasmic-facing. A helical transmembrane segment spans residues 636-656 (VLSFGARSLVVTWYFVLLVLT). At 657–830 (QSYTASLASL…VTAIQLGVGS (174 aa)) the chain is on the extracellular side. N702 carries an N-linked (GlcNAc...) asparagine glycan. Residues 831 to 851 (FWFLFLVVFVVCVLALGKFTF) form a helical membrane-spanning segment. The Cytoplasmic portion of the chain corresponds to 852–920 (CFLWKTKGKD…QVNQTDPDCL (69 aa)).

This sequence belongs to the glutamate-gated ion channel (TC 1.A.10.1) family. May form heteromers. Expressed predominantly in roots.

It is found in the membrane. Glutamate-gated receptor that probably acts as a non-selective cation channel. May be involved in light-signal transduction and calcium homeostasis via the regulation of calcium influx into cells. In Arabidopsis thaliana (Mouse-ear cress), this protein is Glutamate receptor 2.2 (GLR2.2).